The primary structure comprises 1483 residues: Vacuolar protein sorting/targeting protein 10 (1483 aa).

An N-terminal signal peptide occupies residues 1-23; sequence MIVRSLLLAGSLLLASVVPAAHA. Residues 24 to 1347 lie on the Lumenal side of the membrane; the sequence is KSDGPEIKVK…KKKEFEKKHP (1324 aa). Asn295 is a glycosylation site (N-linked (GlcNAc...) asparagine). 4 BNR repeats span residues 376–385, 436–446, 482–492, and 716–726; these read ISFDDGRTFK, YVSNDAGVTWR, YSLNHGKDWKK, and FVTRDHGKTWQ. Residues Asn898 and Asn963 are each glycosylated (N-linked (GlcNAc...) asparagine). BNR repeat units lie at residues 1098 to 1108 and 1140 to 1149; these read FMSRDAGITWH and YSLDEGETWT. A helical membrane pass occupies residues 1348 to 1368; it reads GIGGFGIFLAIFFPVTAATAI. Residues 1369-1399 are Cytoplasmic-facing; the sequence is GYWAFSKWDGKFGRIRLGESQPESLFAGNSP. A helical transmembrane segment spans residues 1400–1420; the sequence is LITIPVAIVAGTVAVITALPL. Residues 1421–1483 lie on the Lumenal side of the membrane; it reads LFSSLWRSFK…EFEGDDDEEV (63 aa).

This sequence belongs to the VPS10-related sortilin family.

The protein localises to the golgi apparatus. Its subcellular location is the trans-Golgi network membrane. It localises to the prevacuolar compartment membrane. Functionally, functions as a sorting receptor in the Golgi compartment required for the intracellular sorting and delivery of soluble vacuolar proteins, like carboxypeptidase Y (CPY) and proteinase A. Executes multiple rounds of sorting by cycling between the late Golgi and a prevacuolar endosome-like compartment. In Arthroderma gypseum (strain ATCC MYA-4604 / CBS 118893) (Microsporum gypseum), this protein is Vacuolar protein sorting/targeting protein 10 (VPS10).